A 129-amino-acid chain; its full sequence is Transcriptional regulator WhiB2 (129 aa).

A disordered region spans residues 23-45 (SHAPHIDTGSTPTGAAGRPQLSL). The 58-residue stretch at 66–123 (LCAQTDPEAFFPEKGGSTREAKRICQGCEVRDACLEYALAHDERFGIWGGLSERERRR) folds into the 4Fe-4S Wbl-type domain. [4Fe-4S] cluster contacts are provided by C67, C90, C93, and C99.

This sequence belongs to the WhiB family. The cofactor is [4Fe-4S] cluster. The Fe-S cluster can be nitrosylated by nitric oxide (NO). Post-translationally, upon Fe-S cluster removal intramolecular disulfide bonds are formed.

It localises to the cytoplasm. Acts as a transcriptional regulator. Probably redox-responsive. The apo- but not holo-form probably binds DNA. This chain is Transcriptional regulator WhiB2 (whiB2), found in Mycolicibacterium smegmatis (strain ATCC 700084 / mc(2)155) (Mycobacterium smegmatis).